We begin with the raw amino-acid sequence, 388 residues long: Processive diacylglycerol beta-glucosyltransferase (388 aa).

Belongs to the glycosyltransferase 28 family. UgtP subfamily.

The protein resides in the cell membrane. It carries out the reaction a 1,2-diacyl-3-O-(beta-D-glucopyranosyl)-sn-glycerol + UDP-alpha-D-glucose = a 1,2-diacyl-3-O-(beta-D-Glc-(1-&gt;6)-beta-D-Glc)-sn-glycerol + UDP + H(+). It catalyses the reaction a 1,2-diacyl-3-O-(beta-D-Glc-(1-&gt;6)-beta-D-Glc)-sn-glycerol + UDP-alpha-D-glucose = a 1,2-diacyl-3-O-(beta-D-Glc-(1-&gt;6)-beta-D-Glc-(1-&gt;6)-beta-D-Glc)-sn-glycerol + UDP + H(+). The enzyme catalyses a 1,2-diacyl-sn-glycerol + UDP-alpha-D-glucose = a 1,2-diacyl-3-O-(beta-D-glucopyranosyl)-sn-glycerol + UDP + H(+). The protein operates within glycolipid metabolism; diglucosyl-diacylglycerol biosynthesis. Its function is as follows. Processive glucosyltransferase involved in the biosynthesis of both the bilayer- and non-bilayer-forming membrane glucolipids. Is able to successively transfer up to three glucosyl residues to diacylglycerol (DAG), thereby catalyzing the formation of beta-monoglucosyl-DAG (3-O-(beta-D-glucopyranosyl)-1,2-diacyl-sn-glycerol), beta-diglucosyl-DAG (3-O-(beta-D-glucopyranosyl-beta-(1-&gt;6)-D-glucopyranosyl)-1,2-diacyl-sn-glycerol) and beta-triglucosyl-DAG (3-O-(beta-D-glucopyranosyl-beta-(1-&gt;6)-D-glucopyranosyl-beta-(1-&gt;6)-D-glucopyranosyl)-1,2-diacyl-sn-glycerol). Beta-diglucosyl-DAG is the predominant glycolipid found in Bacillales and is also used as a membrane anchor for lipoteichoic acid (LTA). This Bacillus cereus (strain ZK / E33L) protein is Processive diacylglycerol beta-glucosyltransferase.